Reading from the N-terminus, the 211-residue chain is Large ribosomal subunit protein uL3 (211 aa).

N5-methylglutamine is present on glutamine 150.

It belongs to the universal ribosomal protein uL3 family. As to quaternary structure, part of the 50S ribosomal subunit. Forms a cluster with proteins L14 and L19. Methylated by PrmB.

In terms of biological role, one of the primary rRNA binding proteins, it binds directly near the 3'-end of the 23S rRNA, where it nucleates assembly of the 50S subunit. In Pseudomonas syringae pv. tomato (strain ATCC BAA-871 / DC3000), this protein is Large ribosomal subunit protein uL3.